The following is a 396-amino-acid chain: Acetate kinase (396 aa).

Residue N7 participates in Mg(2+) binding. An ATP-binding site is contributed by K14. R88 contacts substrate. D145 (proton donor/acceptor) is an active-site residue. ATP contacts are provided by residues 203 to 207, 278 to 280, and 326 to 330; these read HAGNG, DAR, and GIGEN. E379 contributes to the Mg(2+) binding site.

Belongs to the acetokinase family. As to quaternary structure, homodimer. It depends on Mg(2+) as a cofactor. Mn(2+) serves as cofactor.

The protein localises to the cytoplasm. It catalyses the reaction acetate + ATP = acetyl phosphate + ADP. It functions in the pathway metabolic intermediate biosynthesis; acetyl-CoA biosynthesis; acetyl-CoA from acetate: step 1/2. Its function is as follows. Catalyzes the formation of acetyl phosphate from acetate and ATP. Can also catalyze the reverse reaction. The sequence is that of Acetate kinase from Phytoplasma australiense.